A 637-amino-acid chain; its full sequence is Threonine--tRNA ligase (637 aa).

Positions 1-61 constitute a TGS domain; that stretch reads MPVITLPDGS…DKDAELAIVT (61 aa). The segment at 242-533 is catalytic; the sequence is DHRKIGKKLG…LIEHYEGAFP (292 aa). Zn(2+) is bound by residues cysteine 333, histidine 384, and histidine 510.

The protein belongs to the class-II aminoacyl-tRNA synthetase family. Homodimer. Zn(2+) is required as a cofactor.

It is found in the cytoplasm. It carries out the reaction tRNA(Thr) + L-threonine + ATP = L-threonyl-tRNA(Thr) + AMP + diphosphate + H(+). In terms of biological role, catalyzes the attachment of threonine to tRNA(Thr) in a two-step reaction: L-threonine is first activated by ATP to form Thr-AMP and then transferred to the acceptor end of tRNA(Thr). Also edits incorrectly charged L-seryl-tRNA(Thr). This Hahella chejuensis (strain KCTC 2396) protein is Threonine--tRNA ligase.